A 459-amino-acid chain; its full sequence is XK-related protein 3 (459 aa).

10 consecutive transmembrane segments (helical) span residues 35–55 (FSII…LYMF), 68–88 (SFTI…LMFF), 97–117 (AALL…LHTI), 169–189 (IQAF…SLTI), 199–219 (LMTF…ILAI), 238–258 (VVMW…FFIA), 264–284 (SLPV…LEFW), 300–320 (MVGT…INFS), 345–365 (ILHY…FRFF), and 377–397 (LIAV…LLFY).

The protein belongs to the XK family. In terms of tissue distribution, expressed predominantly, if not exclusively, in testis.

Its subcellular location is the cell membrane. The polypeptide is XK-related protein 3 (XKR3) (Homo sapiens (Human)).